The primary structure comprises 378 residues: Ribosomal RNA large subunit methyltransferase G (378 aa).

The protein belongs to the methyltransferase superfamily. RlmG family.

It is found in the cytoplasm. It carries out the reaction guanosine(1835) in 23S rRNA + S-adenosyl-L-methionine = N(2)-methylguanosine(1835) in 23S rRNA + S-adenosyl-L-homocysteine + H(+). Specifically methylates the guanine in position 1835 (m2G1835) of 23S rRNA. This Escherichia coli (strain ATCC 8739 / DSM 1576 / NBRC 3972 / NCIMB 8545 / WDCM 00012 / Crooks) protein is Ribosomal RNA large subunit methyltransferase G.